The primary structure comprises 283 residues: Demethylrebeccamycin-D-glucose O-methyltransferase (283 aa).

S-adenosyl-L-methionine contacts are provided by residues Ser101, Gln106, 129–130 (DA), Leu146, and His151.

This sequence belongs to the methyltransferase superfamily. In terms of assembly, monomer.

It catalyses the reaction 4'-demethylrebeccamycin + S-adenosyl-L-methionine = rebeccamycin + S-adenosyl-L-homocysteine + H(+). In terms of biological role, glycosyl O-methyltransferase that catalyzes the final step in the biosynthesis of rebeccamycin, an indolocarbazole alkaloid that inhibits topoisomerase 1. Has broad substrate specificity and functions as glycosyl O-methyltransferase on a number of rebeccamycin analogs. This is Demethylrebeccamycin-D-glucose O-methyltransferase (rebM) from Lentzea aerocolonigenes (Lechevalieria aerocolonigenes).